A 215-amino-acid chain; its full sequence is BAG family molecular chaperone regulator 5, mitochondrial (215 aa).

The N-terminal 14 residues, 1–14, are a transit peptide targeting the mitochondrion; sequence MKRSRKFSSSTTTT. Residues 50–79 enclose the IQ domain; the sequence is ATAAAARIQSGYRSYRIRNLYKKISSINRE. The region spanning 72–149 is the BAG domain; sequence KISSINREAN…GMQEILDSIS (78 aa).

Binds to the ATPase domain of HSP70/HSC70 chaperones. Interacts with HSP70-1.

The protein resides in the mitochondrion. Co-chaperone that regulates diverse cellular pathways, such as programmed cell death and stress responses. The sequence is that of BAG family molecular chaperone regulator 5, mitochondrial (BAG5) from Arabidopsis thaliana (Mouse-ear cress).